Reading from the N-terminus, the 125-residue chain is MASNTSFLFATIAILLVLNISGRTLPETEDSTNIAARLNGGGLMECWNALYELKSCTNEIVLFFLNGETKLGVDCCQAVEVITTDCWPAMLTSLGFTSDETNVLRGFCQSPNSGGSSPAPSSVKL.

A signal peptide spans 1 to 22; sequence MASNTSFLFATIAILLVLNISG.

It belongs to the plant egg cell-secreted peptide family. As to expression, restricted to female reproductive tissues, specifically accumulating in storage vesicles of the unfertilized egg cell.

It is found in the cytoplasmic vesicle. Its subcellular location is the secreted. Its function is as follows. Involved in the regulation of gamete interactions during the double fertilization and to prevent multiple-pollen tube attraction; mediates the redistribution of the gamete fusogen HAP2/GCS1 to the cell surface after secretion upon sperm arrival. The polypeptide is Egg cell-secreted protein 1.2 (EC1.2) (Arabidopsis thaliana (Mouse-ear cress)).